Consider the following 315-residue polypeptide: Tyrosine recombinase XerC (315 aa).

One can recognise a Core-binding (CB) domain in the interval 13–104 (ADLAAAREEW…GVRSLLRHLE (92 aa)). The Tyr recombinase domain maps to 125–309 (SLPKPLTADD…DTQRLLEVYD (185 aa)). Catalysis depends on residues arginine 168, lysine 193, histidine 261, arginine 264, and histidine 287. The O-(3'-phospho-DNA)-tyrosine intermediate role is filled by tyrosine 296.

Belongs to the 'phage' integrase family. XerC subfamily. Forms a cyclic heterotetrameric complex composed of two molecules of XerC and two molecules of XerD.

The protein localises to the cytoplasm. Site-specific tyrosine recombinase, which acts by catalyzing the cutting and rejoining of the recombining DNA molecules. The XerC-XerD complex is essential to convert dimers of the bacterial chromosome into monomers to permit their segregation at cell division. It also contributes to the segregational stability of plasmids. The polypeptide is Tyrosine recombinase XerC (Brucella suis biovar 1 (strain 1330)).